The primary structure comprises 369 residues: DNA replication and repair protein RecF (369 aa).

Gly-30–Thr-37 contacts ATP.

Belongs to the RecF family.

It localises to the cytoplasm. The RecF protein is involved in DNA metabolism; it is required for DNA replication and normal SOS inducibility. RecF binds preferentially to single-stranded, linear DNA. It also seems to bind ATP. This chain is DNA replication and repair protein RecF, found in Streptococcus equi subsp. zooepidemicus (strain MGCS10565).